The primary structure comprises 254 residues: Large ribosomal subunit protein uL15m (254 aa).

A mitochondrion-targeting transit peptide spans 1-78; it reads MFNILSRVCR…GSGQRRGRRI (78 aa). The disordered stretch occupies residues 44–104; that stretch reads NYQSKKRVGR…KVGHSTGHLK (61 aa). The span at 64–79 shows a compositional bias: basic residues; the sequence is GRGHKGSGQRRGRRIK.

This sequence belongs to the universal ribosomal protein uL15 family. Component of the mitochondrial large ribosomal subunit (mt-LSU). Mature yeast 74S mitochondrial ribosomes consist of a small (37S) and a large (54S) subunit. The 37S small subunit contains a 15S ribosomal RNA (15S mt-rRNA) and at least 32 different proteins. The 54S large subunit contains a 21S rRNA (21S mt-rRNA) and at least 45 different proteins.

It localises to the mitochondrion. Functionally, component of the mitochondrial ribosome (mitoribosome), a dedicated translation machinery responsible for the synthesis of mitochondrial genome-encoded proteins, including at least some of the essential transmembrane subunits of the mitochondrial respiratory chain. The mitoribosomes are attached to the mitochondrial inner membrane and translation products are cotranslationally integrated into the membrane. The sequence is that of Large ribosomal subunit protein uL15m (mrpl10) from Schizosaccharomyces pombe (strain 972 / ATCC 24843) (Fission yeast).